The chain runs to 439 residues: Mitochondrial distribution and morphology protein 12 (439 aa).

In terms of domain architecture, SMP-LTD spans 1-439 (MSIDINWDTI…VYPSFWTFLV (439 aa)). 2 disordered regions span residues 65–165 (PLPD…PGAL) and 229–284 (LTLT…HEKS). The segment covering 69 to 90 (FYEDDEDYPDEEGDEAENEAED) has biased composition (acidic residues). A compositionally biased stretch (basic and acidic residues) spans 109–121 (PSRDSQSRERGRG). A compositionally biased stretch (polar residues) spans 229-243 (LTLTPQSHPDPTSRP).

This sequence belongs to the MDM12 family. In terms of assembly, component of the ER-mitochondria encounter structure (ERMES) or MDM complex, composed of MMM1, MDM10, mdm12 and MDM34. An MMM1 homodimer associates with one molecule of mdm12 on each side in a pairwise head-to-tail manner, and the SMP-LTD domains of MMM1 and mdm12 generate a continuous hydrophobic tunnel for phospholipid trafficking.

Its subcellular location is the mitochondrion outer membrane. The protein resides in the endoplasmic reticulum membrane. Component of the ERMES/MDM complex, which serves as a molecular tether to connect the endoplasmic reticulum (ER) and mitochondria. Components of this complex are involved in the control of mitochondrial shape and protein biogenesis, and function in nonvesicular lipid trafficking between the ER and mitochondria. mdm12 is required for the interaction of the ER-resident membrane protein MMM1 and the outer mitochondrial membrane-resident beta-barrel protein MDM10. The mdm12-MMM1 subcomplex functions in the major beta-barrel assembly pathway that is responsible for biogenesis of all mitochondrial outer membrane beta-barrel proteins, and acts in a late step after the SAM complex. The MDM10-mdm12-MMM1 subcomplex further acts in the TOM40-specific pathway after the action of the mdm12-MMM1 complex. Essential for establishing and maintaining the structure of mitochondria and maintenance of mtDNA nucleoids. In Pyrenophora tritici-repentis (strain Pt-1C-BFP) (Wheat tan spot fungus), this protein is Mitochondrial distribution and morphology protein 12.